The chain runs to 265 residues: HUWE1-associated protein modifying stress responses (265 aa).

Disordered regions lie at residues 1–22, 140–173, and 194–219; these read MEEKKEEGEAEIQEHGPEHWFS, GKAPPPRSSRAPPRLAMVSPSRSTPSETSSSVET, and ISMRSGAPGSPTHLSASSAPSRRRNG. The segment covering 147 to 172 has biased composition (low complexity); sequence SSRAPPRLAMVSPSRSTPSETSSSVE.

It belongs to the HAPSTR1 family. Oligomer.

The protein resides in the nucleus. It localises to the cytoplasm. Its function is as follows. Acts as a central player within a network of stress response pathways promoting cellular adaptability. Functions as a negative regulator of TP53/P53 in the cellular response to telomere erosion and probably also DNA damage. This is HUWE1-associated protein modifying stress responses from Danio rerio (Zebrafish).